Reading from the N-terminus, the 160-residue chain is Nucleotide-binding protein Bpet3698 (160 aa).

This sequence belongs to the YajQ family.

In terms of biological role, nucleotide-binding protein. In Bordetella petrii (strain ATCC BAA-461 / DSM 12804 / CCUG 43448), this protein is Nucleotide-binding protein Bpet3698.